The sequence spans 96 residues: MAKYEILYIIRPNIEEEAKNALVARFDSILTDNGATVVESKDWEKRRLAYEIQDFREGLYHVVNVEANDATALNEFDRLSKINGDILRHMIVKLDA.

Belongs to the bacterial ribosomal protein bS6 family.

In terms of biological role, binds together with bS18 to 16S ribosomal RNA. The sequence is that of Small ribosomal subunit protein bS6 from Streptococcus thermophilus (strain ATCC BAA-250 / LMG 18311).